We begin with the raw amino-acid sequence, 247 residues long: DNA polymerase sliding clamp (247 aa).

Belongs to the PCNA family. As to quaternary structure, homotrimer. The subunits circularize to form a toroid; DNA passes through its center. Replication factor C (RFC) is required to load the toroid on the DNA.

Functionally, sliding clamp subunit that acts as a moving platform for DNA processing. Responsible for tethering the catalytic subunit of DNA polymerase and other proteins to DNA during high-speed replication. This chain is DNA polymerase sliding clamp, found in Methanocorpusculum labreanum (strain ATCC 43576 / DSM 4855 / Z).